A 292-amino-acid polypeptide reads, in one-letter code: Alpha-soluble NSF attachment protein (292 aa).

Residue Ser2 is modified to N-acetylserine. Lys261 is covalently cross-linked (Glycyl lysine isopeptide (Lys-Gly) (interchain with G-Cter in ubiquitin)).

Belongs to the SNAP family. Binds to vacuolar cis-SNARE complexes composed of the v-SNAREs NYV1, VTI1 and YKT6, and the t-SNAREs VAM3 and VAM7. Interacts with SEC18.

Its subcellular location is the membrane. SNARE complex protein that binds to cis-SNARE complexes on membranes and is required for vesicular transport between the endoplasmic reticulum and the Golgi apparatus and for homotypic vacuole fusion. During the priming step of membrane fusion, is released from cis-SNARE complexes by SEC18 to establish a pool of unpaired SNAREs, which are required for interactions in trans during docking and fusion steps. Can displace HOPS from SNARE complexes, which may be a prerequisite for trans-SNARE complex disassembly and subsequent rounds of priming, docking and fusion. This is Alpha-soluble NSF attachment protein (SEC17) from Saccharomyces cerevisiae (strain ATCC 204508 / S288c) (Baker's yeast).